A 328-amino-acid chain; its full sequence is DNA-directed RNA polymerase subunit alpha (328 aa).

Residues Met-1 to Ser-231 form an alpha N-terminal domain (alpha-NTD) region. The segment at Met-252–Gly-328 is alpha C-terminal domain (alpha-CTD).

This sequence belongs to the RNA polymerase alpha chain family. As to quaternary structure, homodimer. The RNAP catalytic core consists of 2 alpha, 1 beta, 1 beta' and 1 omega subunit. When a sigma factor is associated with the core the holoenzyme is formed, which can initiate transcription.

The enzyme catalyses RNA(n) + a ribonucleoside 5'-triphosphate = RNA(n+1) + diphosphate. In terms of biological role, DNA-dependent RNA polymerase catalyzes the transcription of DNA into RNA using the four ribonucleoside triphosphates as substrates. The chain is DNA-directed RNA polymerase subunit alpha from Chlorobium phaeovibrioides (strain DSM 265 / 1930) (Prosthecochloris vibrioformis (strain DSM 265)).